The sequence spans 630 residues: ATP-dependent zinc metalloprotease FtsH 2 (630 aa).

The Cytoplasmic segment spans residues 1–8 (MNNNPNRR). Residues 9-29 (GSLIGPLFIYFILAMLIFMSI) form a helical membrane-spanning segment. Topologically, residues 30-110 (SQLNTSNITE…YIQNTGASWW (81 aa)) are periplasmic. A helical transmembrane segment spans residues 111–131 (VTMLIYMLPLIILMFFWFWMF). Residues 132-630 (RRSGTGEGIP…KETNLFVSYA (499 aa)) are Cytoplasmic-facing. 203-210 (GPPGTGKT) provides a ligand contact to ATP. Zn(2+) is bound at residue His-425. Residue Glu-426 is part of the active site. Positions 429 and 502 each coordinate Zn(2+).

In the central section; belongs to the AAA ATPase family. The protein in the C-terminal section; belongs to the peptidase M41 family. Homohexamer. Requires Zn(2+) as cofactor.

It localises to the cell inner membrane. Functionally, acts as a processive, ATP-dependent zinc metallopeptidase for both cytoplasmic and membrane proteins. Plays a role in the quality control of integral membrane proteins. This Petrotoga mobilis (strain DSM 10674 / SJ95) protein is ATP-dependent zinc metalloprotease FtsH 2.